Here is a 402-residue protein sequence, read N- to C-terminus: C2H2 finger domain transcription factor CON7 (402 aa).

The tract at residues 1 to 247 is disordered; sequence MLASSRQPRH…GAQQHKRPRR (247 aa). 2 stretches are compositionally biased toward polar residues: residues 19-49 and 72-86; these read LSSS…TSVG and CGDN…TVDT. Residues 87–98 are compositionally biased toward low complexity; that stretch reads SSAAQYNASAQQ. Composition is skewed to polar residues over residues 99-116 and 125-151; these read EVRS…TPTS and ARSS…SSGD. Residues 256–282 form a C2H2-type zinc finger; sequence YKCGWQGCEKAYGTLNHLNAHVTMQSH. A coiled-coil region spans residues 289–323; it reads EEFKEIRKEWKARKKEEEAARKADEERQRQAAQSQ. Over residues 302 to 317 the composition is skewed to basic and acidic residues; it reads KKEEEAARKADEERQR. The disordered stretch occupies residues 302-402; the sequence is KKEEEAARKA…GSNQAMYNQR (101 aa). 3 stretches are compositionally biased toward polar residues: residues 322 to 341, 363 to 373, and 392 to 402; these read SQGG…SSNG, AATSTSVQQQP, and GGSNQAMYNQR.

The protein localises to the nucleus. Functionally, transcription factor that plays a central role in appressorium formation and pathogenicity. Required for the expression of a large set of genes including factors that might play a role in membrane metabolism and ergosterol biosynthesis, the chitin-binding protein CBP1,as well as CHS7 that is essential for normal pathogenic development. The chain is C2H2 finger domain transcription factor CON7 from Pyricularia oryzae (strain 70-15 / ATCC MYA-4617 / FGSC 8958) (Rice blast fungus).